A 192-amino-acid chain; its full sequence is 7-methyl-GTP pyrophosphatase (192 aa).

The active-site Proton acceptor is the Asp70.

Belongs to the Maf family. YceF subfamily. A divalent metal cation serves as cofactor.

It is found in the cytoplasm. It carries out the reaction N(7)-methyl-GTP + H2O = N(7)-methyl-GMP + diphosphate + H(+). Nucleoside triphosphate pyrophosphatase that hydrolyzes 7-methyl-GTP (m(7)GTP). May have a dual role in cell division arrest and in preventing the incorporation of modified nucleotides into cellular nucleic acids. The sequence is that of 7-methyl-GTP pyrophosphatase from Xanthomonas campestris pv. campestris (strain 8004).